Consider the following 160-residue polypeptide: Glucagon-1 (160 aa).

Positions 1-22 (MSDPGFLAAPVLLLLLVSLASA) are cleaved as a signal peptide. Propeptides lie at residues 23-40 (SLEQAASRDDDSAERPLS), 74-79 (GGSELQ), and 116-127 (DGGDHLAENSED). The disordered stretch occupies residues 112–132 (KSRRDGGDHLAENSEDKRHAE).

This sequence belongs to the glucagon family.

It localises to the secreted. Its function is as follows. Promotes hydrolysis of glycogen and lipids, and raises the blood sugar level. In Petromyzon marinus (Sea lamprey), this protein is Glucagon-1 (gcg1).